A 429-amino-acid polypeptide reads, in one-letter code: Adenylosuccinate synthetase (429 aa).

Residues 12-18 (GDEGKGK) and 40-42 (GHT) contribute to the GTP site. The Proton acceptor role is filled by Asp13. Mg(2+) contacts are provided by Asp13 and Gly40. IMP is bound by residues 13–16 (DEGK), 38–41 (NAGH), Thr128, Arg142, Gln224, Thr239, and Arg303. Catalysis depends on His41, which acts as the Proton donor. 299–305 (VTTGRPR) is a substrate binding site. GTP contacts are provided by residues Arg305, 331–333 (LLD), and 413–415 (SVG).

It belongs to the adenylosuccinate synthetase family. As to quaternary structure, homodimer. Mg(2+) serves as cofactor.

Its subcellular location is the cytoplasm. It catalyses the reaction IMP + L-aspartate + GTP = N(6)-(1,2-dicarboxyethyl)-AMP + GDP + phosphate + 2 H(+). The protein operates within purine metabolism; AMP biosynthesis via de novo pathway; AMP from IMP: step 1/2. Its function is as follows. Plays an important role in the de novo pathway of purine nucleotide biosynthesis. Catalyzes the first committed step in the biosynthesis of AMP from IMP. The sequence is that of Adenylosuccinate synthetase from Clostridioides difficile (strain 630) (Peptoclostridium difficile).